The chain runs to 340 residues: Guanine nucleotide-binding protein G(I)/G(S)/G(T) subunit beta-1 (340 aa).

The residue at position 2 (S2) is an N-acetylserine. Phosphoserine is present on S2. WD repeat units lie at residues R46–P94, L95–A140, G141–T181, G182–T223, G224–D267, N268–A309, and G310–N340. The residue at position 266 (H266) is a Phosphohistidine.

Belongs to the WD repeat G protein beta family. In terms of assembly, g proteins are composed of 3 units, alpha, beta and gamma. The heterodimer formed by GNB1 and GNG2 interacts with ARHGEF5. The heterodimer formed by GNB1 and GNG2 interacts with GRK2. Forms a complex with GNAO1 and GNG3. Interacts with ARHGEF18 and RASD2. Forms complexes with TAS2R14 and G-proteins; these complexes play a role in the perception of bitterness. Component of the TAS2R14-GNAI1 complex, consisting of TAS2R14, GNAI1, GNB1 and GNG2. Component of the TAS2R14-GNAT3 complex, consisting of TAS2R14, GNAT3, GNB1 and GNG2. Component of the TAS2R14-GNAS2 complex, consisting of TAS2R14, GNAS2, GNB1 and GNG2. In terms of processing, phosphorylation at His-266 by NDKB contributes to G protein activation by increasing the high energetic phosphate transfer onto GDP.

Its function is as follows. Guanine nucleotide-binding proteins (G proteins) are involved as a modulator or transducer in various transmembrane signaling systems. The beta and gamma chains are required for the GTPase activity, for replacement of GDP by GTP, and for G protein-effector interaction. In Pongo abelii (Sumatran orangutan), this protein is Guanine nucleotide-binding protein G(I)/G(S)/G(T) subunit beta-1 (GNB1).